The primary structure comprises 216 residues: Uracil phosphoribosyltransferase (216 aa).

Residues arginine 85, arginine 110, and 135 to 143 (DPMVATGYS) contribute to the 5-phospho-alpha-D-ribose 1-diphosphate site. Uracil is bound by residues isoleucine 200 and 205-207 (GDA). Aspartate 206 contributes to the 5-phospho-alpha-D-ribose 1-diphosphate binding site.

It belongs to the UPRTase family. It depends on Mg(2+) as a cofactor.

It catalyses the reaction UMP + diphosphate = 5-phospho-alpha-D-ribose 1-diphosphate + uracil. Its pathway is pyrimidine metabolism; UMP biosynthesis via salvage pathway; UMP from uracil: step 1/1. With respect to regulation, allosterically activated by GTP. Functionally, catalyzes the conversion of uracil and 5-phospho-alpha-D-ribose 1-diphosphate (PRPP) to UMP and diphosphate. The chain is Uracil phosphoribosyltransferase from Burkholderia lata (strain ATCC 17760 / DSM 23089 / LMG 22485 / NCIMB 9086 / R18194 / 383).